The following is a 114-amino-acid chain: Putative pterin-4-alpha-carbinolamine dehydratase (114 aa).

The protein belongs to the pterin-4-alpha-carbinolamine dehydratase family.

The enzyme catalyses (4aS,6R)-4a-hydroxy-L-erythro-5,6,7,8-tetrahydrobiopterin = (6R)-L-erythro-6,7-dihydrobiopterin + H2O. This Pseudoalteromonas translucida (strain TAC 125) protein is Putative pterin-4-alpha-carbinolamine dehydratase.